A 594-amino-acid chain; its full sequence is MRWWAGAALLLAALLFGRPAAAMEAQPVAYSEFIQDVQARRVAYARITGQRLEAAYRDGTVRVVTLPPGEARLPLVLMQYGARVEFVRPADPIAFRTLLRFIPPLLILGAILWFTRRTAGGSGGLLTMEQSPARLYRVGEASVTLQDVAGLDEVKAELQEVIDFLREPERYRAMGARIPRGILLSGPPGTGKTLLARALAGEAGVPFFSASGSDFVELFAGTGAARVRALFDRARKAAPCIVFIDEIDALARRRGVGAGGGTEEREQTINQLLVEMDGFDSGEGVIVVAATNRPDVLDPAVLRPGRFDRHLTVDPPDRKGREQILAVHAREKRLSQAVALAEVARLTPGFTGADLANLLNEAALLAVRAGEREIGWPQVAMALERVTSGGPPRRVRAAAADRVRAAYHEAGHALAGLALRGSDRLVRVTILPHGRGLGHTLFRDQDEERYLHTRRDAFDRLTELLAGRAAEALVLGEVSAGAADDLERATGLAREMVTRWGMDADIGPLRLEHAVEGEESLRRADGAMRALVAAAERAARALLEARRSGLERLAAALLERERLEGPEVEALLELTPGEKPYIIVANSRGDEGNQ.

The Cytoplasmic segment spans residues Met-1–Arg-2. The helical transmembrane segment at Trp-3 to Met-23 threads the bilayer. Residues Glu-24–Pro-92 are Extracellular-facing. A helical transmembrane segment spans residues Ile-93–Trp-113. Topologically, residues Phe-114–Gln-594 are cytoplasmic. Gly-186–Thr-193 is a binding site for ATP. His-408 contacts Zn(2+). Residue Glu-409 is part of the active site. The Zn(2+) site is built by His-412 and Asp-485.

The protein in the central section; belongs to the AAA ATPase family. This sequence in the C-terminal section; belongs to the peptidase M41 family. As to quaternary structure, homohexamer. It depends on Zn(2+) as a cofactor.

The protein resides in the cell membrane. Functionally, acts as a processive, ATP-dependent zinc metallopeptidase for both cytoplasmic and membrane proteins. Plays a role in the quality control of integral membrane proteins. This Symbiobacterium thermophilum (strain DSM 24528 / JCM 14929 / IAM 14863 / T) protein is ATP-dependent zinc metalloprotease FtsH 1.